Consider the following 283-residue polypeptide: Diaminopimelate epimerase (283 aa).

The substrate site is built by asparagine 13, glutamine 45, and asparagine 65. Cysteine 74 serves as the catalytic Proton donor. Residues 75 to 76 (GN), asparagine 156, asparagine 190, and 208 to 209 (ER) each bind substrate. Cysteine 217 serves as the catalytic Proton acceptor. 218-219 (GS) contributes to the substrate binding site.

Belongs to the diaminopimelate epimerase family. Homodimer.

The protein localises to the cytoplasm. The enzyme catalyses (2S,6S)-2,6-diaminopimelate = meso-2,6-diaminopimelate. It functions in the pathway amino-acid biosynthesis; L-lysine biosynthesis via DAP pathway; DL-2,6-diaminopimelate from LL-2,6-diaminopimelate: step 1/1. In terms of biological role, catalyzes the stereoinversion of LL-2,6-diaminopimelate (L,L-DAP) to meso-diaminopimelate (meso-DAP), a precursor of L-lysine and an essential component of the bacterial peptidoglycan. In Bartonella henselae (strain ATCC 49882 / DSM 28221 / CCUG 30454 / Houston 1) (Rochalimaea henselae), this protein is Diaminopimelate epimerase.